The following is a 435-amino-acid chain: Minor fimbrial subunit HifE (435 aa).

The signal sequence occupies residues 1 to 31 (MKTLTTYAKYFTPISKIAFLFCFLMGNIAEA).

Belongs to the fimbrial protein family.

The protein resides in the fimbrium. In terms of biological role, may be a minor structural protein required for pilus biogenesis. May be the adhesive component in the pili. This is Minor fimbrial subunit HifE (hifE) from Haemophilus influenzae.